We begin with the raw amino-acid sequence, 279 residues long: HTH-type transcriptional regulator HdfR (279 aa).

The HTH lysR-type domain occupies Met1–Thr58. The segment at residues Phe18–Arg37 is a DNA-binding region (H-T-H motif).

This sequence belongs to the LysR transcriptional regulatory family.

In terms of biological role, negatively regulates the transcription of the flagellar master operon flhDC by binding to the upstream region of the operon. In Shigella boydii serotype 18 (strain CDC 3083-94 / BS512), this protein is HTH-type transcriptional regulator HdfR.